The primary structure comprises 434 residues: Methylenetetrahydrofolate--tRNA-(uracil-5-)-methyltransferase TrmFO (434 aa).

An FAD-binding site is contributed by 9–14 (GAGLAG).

The protein belongs to the MnmG family. TrmFO subfamily. Requires FAD as cofactor.

Its subcellular location is the cytoplasm. It catalyses the reaction uridine(54) in tRNA + (6R)-5,10-methylene-5,6,7,8-tetrahydrofolate + NADH + H(+) = 5-methyluridine(54) in tRNA + (6S)-5,6,7,8-tetrahydrofolate + NAD(+). It carries out the reaction uridine(54) in tRNA + (6R)-5,10-methylene-5,6,7,8-tetrahydrofolate + NADPH + H(+) = 5-methyluridine(54) in tRNA + (6S)-5,6,7,8-tetrahydrofolate + NADP(+). In terms of biological role, catalyzes the folate-dependent formation of 5-methyl-uridine at position 54 (M-5-U54) in all tRNAs. This Bacillus licheniformis (strain ATCC 14580 / DSM 13 / JCM 2505 / CCUG 7422 / NBRC 12200 / NCIMB 9375 / NCTC 10341 / NRRL NRS-1264 / Gibson 46) protein is Methylenetetrahydrofolate--tRNA-(uracil-5-)-methyltransferase TrmFO.